A 411-amino-acid chain; its full sequence is LL-diaminopimelate aminotransferase (411 aa).

Substrate-binding residues include Tyr15 and Gly42. Residues Tyr72, 108-109, Tyr132, Asn188, Tyr219, and 247-249 contribute to the pyridoxal 5'-phosphate site; these read AK and SFS. The substrate site is built by Lys109, Tyr132, and Asn188. Residue Lys250 is modified to N6-(pyridoxal phosphate)lysine. Pyridoxal 5'-phosphate is bound by residues Arg258 and Asn293. 2 residues coordinate substrate: Asn293 and Arg389.

This sequence belongs to the class-I pyridoxal-phosphate-dependent aminotransferase family. LL-diaminopimelate aminotransferase subfamily. As to quaternary structure, homodimer. The cofactor is pyridoxal 5'-phosphate.

It carries out the reaction (2S,6S)-2,6-diaminopimelate + 2-oxoglutarate = (S)-2,3,4,5-tetrahydrodipicolinate + L-glutamate + H2O + H(+). Its pathway is amino-acid biosynthesis; L-lysine biosynthesis via DAP pathway; LL-2,6-diaminopimelate from (S)-tetrahydrodipicolinate (aminotransferase route): step 1/1. Involved in the synthesis of meso-diaminopimelate (m-DAP or DL-DAP), required for both lysine and peptidoglycan biosynthesis. Catalyzes the direct conversion of tetrahydrodipicolinate to LL-diaminopimelate. Is also able to catalyze the reverse reaction in vitro, i.e. the transamination of LL-diaminopimelate with 2-oxoglutarate to produce tetrahydrodipicolinate and glutamate. Can also use m-DAP instead of LL-DAP as the amino-group donor, and oxaloacetate or pyruvate as the amino-group acceptor. The chain is LL-diaminopimelate aminotransferase from Desulfitobacterium hafniense (strain DSM 10664 / DCB-2).